Reading from the N-terminus, the 462-residue chain is Elongation factor 1-alpha (462 aa).

Gly-2 carries the n,N,N-trimethylglycine modification. Position 3 is an N6,N6-dimethyllysine; alternate (Lys-3). At Lys-3 the chain carries N6-methyllysine; alternate. The region spanning 5 to 242 (KAHVNVVVIG…DAIEPPVRPS (238 aa)) is the tr-type G domain. The G1 stretch occupies residues 14 to 21 (GHVDSGKS). 14–21 (GHVDSGKS) contributes to the GTP binding site. At Lys-30 the chain carries N6-methyllysine. The interval 70 to 74 (GITID) is G2. Residue Lys-79 is modified to N6,N6,N6-trimethyllysine. The tract at residues 91 to 94 (DAPG) is G3. GTP-binding positions include 91-95 (DAPGH) and 153-156 (NKMD). Positions 153-156 (NKMD) are G4. Residues 192-194 (SGW) are G5. Lys-318 bears the N6,N6-dimethyllysine; alternate mark. Lys-318 carries the N6-methyllysine; alternate modification. Lys-392 is subject to N6-methyllysine.

It belongs to the TRAFAC class translation factor GTPase superfamily. Classic translation factor GTPase family. EF-Tu/EF-1A subfamily.

It localises to the cytoplasm. In terms of biological role, this protein promotes the GTP-dependent binding of aminoacyl-tRNA to the A-site of ribosomes during protein biosynthesis. The polypeptide is Elongation factor 1-alpha (TEF1) (Serendipita indica (Root endophyte fungus)).